Reading from the N-terminus, the 324-residue chain is Probable metal transport system membrane protein CPn_0346/CP_0414/CPj0346/CpB0353 (324 aa).

Helical transmembrane passes span 1–21, 39–59, 64–84, 94–114, 125–145, 165–185, 201–221, 226–246, 252–272, and 286–306; these read MALGPSPYYGVSFFQFFSVFF, IQIIVFLAISCSGAFAGTFLV, AMYANAVSHTVLFGLVCVCLF, GTLTLAAMATAMLTGFLIYFI, STALVFSLLFSLSLVLLVFMT, EDIFPVTIVILANAVITIFAF, LGIPIRLVDYLIIFQLSACLV, AVGVLMALAFLIIPSLIAKVI, SLMAWSLVFSIGTAFLAPASS, and SGISVVFLTMMYIVVKFISYF.

The protein belongs to the ABC-3 integral membrane protein family.

It localises to the cell inner membrane. Part of an ATP-driven transport system CPn_0346/CPn_0347/CPn_0348/CPn_0349 for a metal. This chain is Probable metal transport system membrane protein CPn_0346/CP_0414/CPj0346/CpB0353, found in Chlamydia pneumoniae (Chlamydophila pneumoniae).